The chain runs to 354 residues: UDP-3-O-acylglucosamine N-acyltransferase (354 aa).

His-258 acts as the Proton acceptor in catalysis.

This sequence belongs to the transferase hexapeptide repeat family. LpxD subfamily. Homotrimer.

The enzyme catalyses a UDP-3-O-[(3R)-3-hydroxyacyl]-alpha-D-glucosamine + a (3R)-hydroxyacyl-[ACP] = a UDP-2-N,3-O-bis[(3R)-3-hydroxyacyl]-alpha-D-glucosamine + holo-[ACP] + H(+). It functions in the pathway bacterial outer membrane biogenesis; LPS lipid A biosynthesis. Functionally, catalyzes the N-acylation of UDP-3-O-acylglucosamine using 3-hydroxyacyl-ACP as the acyl donor. Is involved in the biosynthesis of lipid A, a phosphorylated glycolipid that anchors the lipopolysaccharide to the outer membrane of the cell. In Rhizobium meliloti (strain 1021) (Ensifer meliloti), this protein is UDP-3-O-acylglucosamine N-acyltransferase.